A 349-amino-acid chain; its full sequence is 4-hydroxy-3-methylbut-2-en-1-yl diphosphate synthase (flavodoxin) (349 aa).

Residues Cys-264, Cys-267, Cys-299, and Glu-306 each contribute to the [4Fe-4S] cluster site.

Belongs to the IspG family. [4Fe-4S] cluster is required as a cofactor.

It carries out the reaction (2E)-4-hydroxy-3-methylbut-2-enyl diphosphate + oxidized [flavodoxin] + H2O + 2 H(+) = 2-C-methyl-D-erythritol 2,4-cyclic diphosphate + reduced [flavodoxin]. Its pathway is isoprenoid biosynthesis; isopentenyl diphosphate biosynthesis via DXP pathway; isopentenyl diphosphate from 1-deoxy-D-xylulose 5-phosphate: step 5/6. Converts 2C-methyl-D-erythritol 2,4-cyclodiphosphate (ME-2,4cPP) into 1-hydroxy-2-methyl-2-(E)-butenyl 4-diphosphate. This Clostridium tetani (strain Massachusetts / E88) protein is 4-hydroxy-3-methylbut-2-en-1-yl diphosphate synthase (flavodoxin).